Here is an 83-residue protein sequence, read N- to C-terminus: MDTRVIAVLFVAIMVLSSTNALPKQKGSYKNMNHADFLKGLDRASSKRDCRDSHWSCFFQSNYEDICSTAQAEECALSCGLCE.

A signal peptide spans M1–A21. Residues L22–R48 constitute a propeptide that is removed on maturation. 3 cysteine pairs are disulfide-bonded: C50–C82, C57–C75, and C67–C79. The 34-residue stretch at C50–E83 folds into the ShKT domain.

Contains 3 disulfide bonds. Expressed in various neurons (ectodermal sensory cells) (in planulae and primary polyps). Not expressed in nematocytes.

Its function is as follows. Probable neuropeptide. This Nematostella vectensis (Starlet sea anemone) protein is Protein ShK-like4.